Reading from the N-terminus, the 121-residue chain is Large ribosomal subunit protein uL22c (121 aa).

It belongs to the universal ribosomal protein uL22 family. As to quaternary structure, part of the 50S ribosomal subunit.

The protein localises to the plastid. The protein resides in the chloroplast. Functionally, this protein binds specifically to 23S rRNA. Its function is as follows. The globular domain of the protein is located near the polypeptide exit tunnel on the outside of the subunit, while an extended beta-hairpin is found that lines the wall of the exit tunnel in the center of the 70S ribosome. The protein is Large ribosomal subunit protein uL22c (rpl22) of Lemna minor (Common duckweed).